A 1233-amino-acid polypeptide reads, in one-letter code: MGFLKLIEIENFKSYKGRQIIGPFQRFTAIIGPNGSGKSNLMDAISFVLGEKTSNLRVKTLRDLIHGAPVGKPAANRAFVSMVYSEEGAEDRTFARVIVGGSSEYKINNKVVQLHEYSEELEKLGILIKARNFLVFQGAVESIAMKNPKERTALFEEISRSGELAQEYDKRKKEMVKAEEDTQFNYHRKKNIAAERKEAKQEKEEADRYQRLKDEVVRAQVQLQLFKLYHNEVEIEKLNKELASKNKEIEKDKKRMDKVEDELKEKKKELGKMMREQQQIEKEIKEKDSELNQKRPQYIKAKENTSHKIKKLEAAKKSLQNAQKHYKKRKGDMDELEKEMLSVEKARQEFEERMEEESQSQGRDLTLEENQVKKYHRLKEEASKRAATLAQELEKFNRDQKADQDRLDLEERKKVETEAKIKQKLREIEENQKRIEKLEEYITTSKQSLEEQKKLEGELTEEVEMAKRRIDEINKELNQVMEQLGDARIDRQESSRQQRKAEIMESIKRLYPGSVYGRLIDLCQPTQKKYQIAVTKVLGKNMDAIIVDSEKTGRDCIQYIKEQRGEPETFLPLDYLEVKPTDEKLRELKGAKLVIDVIRYEPPHIKKALQYACGNALVCDNVEDARRIAFGGHQRHKTVALDGTLFQKSGVISGGASDLKAKARRWDEKAVDKLKEKKERLTEELKEQMKAKRKEAELRQVQSQAHGLQMRLKYSQSDLEQTKTRHLALNLQEKSKLESELANFGPRINDIKRIIQSREREMKDLKEKMNQVEDEVFEEFCREIGVRNIREFEEEKVKRQNEIAKKRLEFENQKTRLGIQLDFEKNQLKEDQDKVHMWEQTVKKDENEIEKLKKEEQRHMKIIDETMAQLQDLKNQHLAKKSEVNDKNHEMEEIRKKLGGANKEMTHLQKEVTAIETKLEQKRSDRHNLLQACKMQDIKLPLSKGTMDDISQEEGSSQGEDSVSGSQRISSIYAREALIEIDYGDLCEDLKDAQAEEEIKQEMNTLQQKLNEQQSVLQRIAAPNMKAMEKLESVRDKFQETSDEFEAARKRAKKAKQAFEQIKKERFDRFNACFESVATNIDEIYKALSRNSSAQAFLGPENPEEPYLDGINYNCVAPGKRFRPMDNLSGGEKTVAALALLFAIHSYKPAPFFVLDEIDAALDNTNIGKVANYIKEQSTCNFQAIVISLKEEFYTKAESLIGVYPEQGDCVISKVLTFDLTKYPDANPNPNEQ.

ATP is bound at residue 32–39; that stretch reads GPNGSGKS. Coiled coils occupy residues 104–124 and 163–503; these read EYKI…LEKL and ELAQ…KAEI. The segment covering 284 to 293 has biased composition (basic and acidic residues); it reads IKEKDSELNQ. Disordered stretches follow at residues 284–308 and 348–369; these read IKEK…TSHK and QEFE…TLEE. Residues Ser358 and Ser360 each carry the phosphoserine modification. Residues 515–629 form the SMC hinge domain; sequence VYGRLIDLCQ…DNVEDARRIA (115 aa). 2 positions are modified to N6-acetyllysine: Lys648 and Lys713. Residues 660 to 935 adopt a coiled-coil conformation; sequence KAKARRWDEK…RHNLLQACKM (276 aa). The disordered stretch occupies residues 947–966; it reads MDDISQEEGSSQGEDSVSGS. Low complexity predominate over residues 953–966; it reads EEGSSQGEDSVSGS. A Phosphoserine; by ATM modification is found at Ser957. Position 962 is a phosphoserine (Ser962). Ser966 carries the post-translational modification Phosphoserine; by ATM and ATR. The residue at position 970 (Ser970) is a Phosphoserine. The stretch at 991-1068 forms a coiled coil; it reads KDAQAEEEIK…FEQIKKERFD (78 aa). At Lys1037 the chain carries N6-acetyllysine.

Belongs to the SMC family. SMC1 subfamily. Forms a heterodimer with SMC3 in cohesin complexes. Cohesin complexes are composed of the SMC1 (SMC1A or SMC1B) and SMC3 heterodimer attached via their SMC hinge domain, RAD21 which link them, and one STAG protein (STAG1, STAG2 or STAG3), which interacts with RAD21. In germ cell cohesin complexes, SMC1A is mutually exclusive with SMC1B. Interacts with BRCA1. Found in a complex with CDCA5, SMC3 and RAD21, PDS5A/SCC-112 and PDS5B/APRIN. Interacts with NDC80. Interacts with BRAT1. Found in a complex containing POLE and SMC3. Interacts with RPGR, STAG3 and SYCP2. The cohesin complex interacts with the cohesin loading complex subunits NIPBL/Scc2 (via HEAT repeats) and MAU2/Scc4. NIPBL directly contacts all members of the complex, RAD21, SMC1A/B, SMC3 and STAG1. In terms of processing, ubiquitinated by the DCX(DCAF15) complex, leading to its degradation. Post-translationally, phosphorylated by ATM upon ionizing radiation in a NBS1-dependent manner. Phosphorylated by ATR upon DNA methylation in a MSH2/MSH6-dependent manner. Phosphorylation of Ser-957 and Ser-966 activates it and is required for S-phase checkpoint activation.

It is found in the nucleus. Its subcellular location is the chromosome. The protein localises to the centromere. The protein resides in the kinetochore. Its function is as follows. Involved in chromosome cohesion during cell cycle and in DNA repair. Central component of cohesin complex. The cohesin complex is required for the cohesion of sister chromatids after DNA replication. The cohesin complex apparently forms a large proteinaceous ring within which sister chromatids can be trapped. At anaphase, the complex is cleaved and dissociates from chromatin, allowing sister chromatids to segregate. The cohesin complex may also play a role in spindle pole assembly during mitosis. Involved in DNA repair via its interaction with BRCA1 and its related phosphorylation by ATM, or via its phosphorylation by ATR. Works as a downstream effector both in the ATM/NBS1 branch and in the ATR/MSH2 branch of S-phase checkpoint. The sequence is that of Structural maintenance of chromosomes protein 1A (SMC1A) from Homo sapiens (Human).